The following is a 142-amino-acid chain: ATP synthase epsilon chain (142 aa).

This sequence belongs to the ATPase epsilon chain family. In terms of assembly, F-type ATPases have 2 components, CF(1) - the catalytic core - and CF(0) - the membrane proton channel. CF(1) has five subunits: alpha(3), beta(3), gamma(1), delta(1), epsilon(1). CF(0) has three main subunits: a, b and c.

Its subcellular location is the cell inner membrane. Its function is as follows. Produces ATP from ADP in the presence of a proton gradient across the membrane. In Shewanella denitrificans (strain OS217 / ATCC BAA-1090 / DSM 15013), this protein is ATP synthase epsilon chain.